The following is a 157-amino-acid chain: Thiosulfate sulfurtransferase/rhodanese-like domain-containing protein 3 (157 aa).

A Rhodanese domain is found at 52–154 (NSKDIMLIDV…WVTYEISEEK (103 aa)). K96 is modified (N6-succinyllysine). The active-site Cysteine persulfide intermediate is the C114.

The sequence is that of Thiosulfate sulfurtransferase/rhodanese-like domain-containing protein 3 (Tstd3) from Mus musculus (Mouse).